Reading from the N-terminus, the 89-residue chain is Large ribosomal subunit protein eL37A (89 aa).

The Zn(2+) site is built by cysteine 19, cysteine 22, cysteine 34, and cysteine 37. The C4-type zinc-finger motif lies at 19–37 (CRRCGKRSFHIQKSTCACC).

It belongs to the eukaryotic ribosomal protein eL37 family. Component of the large ribosomal subunit (LSU). Mature yeast ribosomes consist of a small (40S) and a large (60S) subunit. The 40S small subunit contains 1 molecule of ribosomal RNA (18S rRNA) and at least 33 different proteins. The large 60S subunit contains 3 rRNA molecules (25S, 5.8S and 5S rRNA) and at least 46 different proteins. It depends on Zn(2+) as a cofactor.

The protein localises to the cytoplasm. Component of the ribosome, a large ribonucleoprotein complex responsible for the synthesis of proteins in the cell. The small ribosomal subunit (SSU) binds messenger RNAs (mRNAs) and translates the encoded message by selecting cognate aminoacyl-transfer RNA (tRNA) molecules. The large subunit (LSU) contains the ribosomal catalytic site termed the peptidyl transferase center (PTC), which catalyzes the formation of peptide bonds, thereby polymerizing the amino acids delivered by tRNAs into a polypeptide chain. The nascent polypeptides leave the ribosome through a tunnel in the LSU and interact with protein factors that function in enzymatic processing, targeting, and the membrane insertion of nascent chains at the exit of the ribosomal tunnel. This Schizosaccharomyces pombe (strain 972 / ATCC 24843) (Fission yeast) protein is Large ribosomal subunit protein eL37A (rpl3703).